Here is a 341-residue protein sequence, read N- to C-terminus: Golgi-associated RAB2 interactor protein 1B (341 aa).

Belongs to the GARIN family. In terms of tissue distribution, expressed in testis (at protein level).

Its subcellular location is the golgi apparatus. In terms of biological role, RAB2B effector protein required for accurate acrosome formation and normal male fertility. In complex with RAB2A/RAB2B, seems to suppress excessive vesicle trafficking during acrosome formation. The polypeptide is Golgi-associated RAB2 interactor protein 1B (Mus musculus (Mouse)).